The following is a 447-amino-acid chain: Methylenetetrahydrofolate--tRNA-(uracil-5-)-methyltransferase TrmFO (447 aa).

13-18 serves as a coordination point for FAD; sequence GAGLAG.

Belongs to the MnmG family. TrmFO subfamily. It depends on FAD as a cofactor.

The protein resides in the cytoplasm. It catalyses the reaction uridine(54) in tRNA + (6R)-5,10-methylene-5,6,7,8-tetrahydrofolate + NADH + H(+) = 5-methyluridine(54) in tRNA + (6S)-5,6,7,8-tetrahydrofolate + NAD(+). It carries out the reaction uridine(54) in tRNA + (6R)-5,10-methylene-5,6,7,8-tetrahydrofolate + NADPH + H(+) = 5-methyluridine(54) in tRNA + (6S)-5,6,7,8-tetrahydrofolate + NADP(+). In terms of biological role, catalyzes the folate-dependent formation of 5-methyl-uridine at position 54 (M-5-U54) in all tRNAs. In Streptococcus thermophilus (strain CNRZ 1066), this protein is Methylenetetrahydrofolate--tRNA-(uracil-5-)-methyltransferase TrmFO.